The primary structure comprises 148 residues: MIDVVEIQKILPHRFPFLLIDRVVELEPAKNIVAYKNVTIGEPIFQGHFPGHPIYPGVMIIEGMAQAGGVLAFKSMSDEHQAGIENKVVYFMSIDGAKFRHPVRPGDRLEYRLNVLKHKGNIWVLEGKAYVDDVLCAEAELKAMIVDK.

Histidine 48 is a catalytic residue.

This sequence belongs to the thioester dehydratase family. FabZ subfamily.

It is found in the cytoplasm. The enzyme catalyses a (3R)-hydroxyacyl-[ACP] = a (2E)-enoyl-[ACP] + H2O. Its function is as follows. Involved in unsaturated fatty acids biosynthesis. Catalyzes the dehydration of short chain beta-hydroxyacyl-ACPs and long chain saturated and unsaturated beta-hydroxyacyl-ACPs. The protein is 3-hydroxyacyl-[acyl-carrier-protein] dehydratase FabZ of Campylobacter concisus (strain 13826).